The sequence spans 322 residues: Acetyl-coenzyme A carboxylase carboxyl transferase subunit beta (322 aa).

The CoA carboxyltransferase N-terminal domain maps to 24-293 (LWIKCPDTGQ…PAVEEIAASD (270 aa)).

It belongs to the AccD/PCCB family. Acetyl-CoA carboxylase is a heterohexamer composed of biotin carboxyl carrier protein (AccB), biotin carboxylase (AccC) and two subunits each of ACCase subunit alpha (AccA) and ACCase subunit beta (AccD).

It localises to the cytoplasm. It catalyses the reaction N(6)-carboxybiotinyl-L-lysyl-[protein] + acetyl-CoA = N(6)-biotinyl-L-lysyl-[protein] + malonyl-CoA. It participates in lipid metabolism; malonyl-CoA biosynthesis; malonyl-CoA from acetyl-CoA: step 1/1. Functionally, component of the acetyl coenzyme A carboxylase (ACC) complex. Biotin carboxylase (BC) catalyzes the carboxylation of biotin on its carrier protein (BCCP) and then the CO(2) group is transferred by the transcarboxylase to acetyl-CoA to form malonyl-CoA. This chain is Acetyl-coenzyme A carboxylase carboxyl transferase subunit beta, found in Rhodopseudomonas palustris (strain BisB5).